Consider the following 399-residue polypeptide: Leu/Ile/Val-binding protein homolog 7 (399 aa).

An N-terminal signal peptide occupies residues 1 to 22; the sequence is MEKHLIALSVAALQAGAAPASA.

It belongs to the leucine-binding protein family.

Functionally, component of an amino-acid transport system. The sequence is that of Leu/Ile/Val-binding protein homolog 7 from Brucella abortus (strain 2308).